The primary structure comprises 166 residues: Large ribosomal subunit protein uL11x (166 aa).

The protein belongs to the universal ribosomal protein uL11 family.

Functionally, binds directly to 26S ribosomal RNA. The polypeptide is Large ribosomal subunit protein uL11x (RPL12C) (Arabidopsis thaliana (Mouse-ear cress)).